The sequence spans 345 residues: cAMP-responsive element modulator (345 aa).

A KID domain is found at 88-147 (VQVAAIAETDESAESEGVIDSHKRREILSRRPSYRKILNELSSDVPGVPKIEEERSEEEG). Phosphoserine is present on residues S102, S129, S271, S274, and S277. A bZIP domain is found at 286 to 345 (TRKRELRLMKNREAAKECRRRKKEYVKCLESRVAVLEVQNKKLIEELETLKDICSPKTDY). Positions 287–312 (RKRELRLMKNREAAKECRRRKKEYVK) are basic motif. A leucine-zipper region spans residues 314 to 335 (LESRVAVLEVQNKKLIEELETL).

It belongs to the bZIP family. As to quaternary structure, binds DNA as a dimer. Interacts with FHL5. Interacts with CDC34. May interact with TSSK4. In terms of processing, isoform 9 is ubiquitinated by CDC34 and RAD6B in order to be degraded by the proteasome. Post-translationally, stimulated by phosphorylation. Phosphorylated on Ser-116 by TSSK4 in vitro. Expressed in testes (round spermatids) (at protein level). Isoform 14 is the major activator form in testes.

It localises to the nucleus. Its subcellular location is the cytoplasm. Functionally, transcriptional regulator that binds the cAMP response element (CRE), a sequence present in many viral and cellular promoters. Isoforms are either transcriptional activators or repressors. Plays a role in spermatogenesis and is involved in spermatid maturation. In terms of biological role, may play a role in the regulation of the circadian clock: acts as a transcriptional repressor of the core circadian component PER1 by directly binding to cAMP response elements in its promoter. In Homo sapiens (Human), this protein is cAMP-responsive element modulator.